The sequence spans 439 residues: Trehalose-phosphatase (439 aa).

Residues D163 and D165 each coordinate Mg(2+). Residue D165 is the Proton donor/acceptor of the active site. A substrate-binding site is contributed by 282-284 (QRK). D373 contributes to the Mg(2+) binding site.

Belongs to the gob-1 trehalose phosphatase family. Mg(2+) is required as a cofactor. Ubiquitously expressed. Strong expression in intestine.

The enzyme catalyses alpha,alpha-trehalose 6-phosphate + H2O = alpha,alpha-trehalose + phosphate. Functionally, catalyzes the hydrolysis of trehalose 6-phosphate to trehalose and phosphate; prevents the accumulation of toxic levels of trehalose 6-phosphate. The sequence is that of Trehalose-phosphatase from Caenorhabditis elegans.